A 260-amino-acid polypeptide reads, in one-letter code: Snake venom serine proteinase 4a (260 aa).

A signal peptide spans 1-18 (MVLIRVLANLLILQLSYA). The propeptide occupies 19–24 (QMSSEL). The region spanning 25–251 (VTGGDECNRN…HLDWIQRIIA (227 aa)) is the Peptidase S1 domain. Cystine bridges form between C31–C163, C50–C66, C98–C258, C142–C212, C174–C191, and C202–C227. The Charge relay system role is filled by H65. N103 carries an N-linked (GlcNAc...) asparagine glycan. Residue D110 is the Charge relay system of the active site. The Charge relay system role is filled by S206.

Belongs to the peptidase S1 family. Snake venom subfamily. Monomer. Expressed by the venom gland.

It is found in the secreted. In terms of biological role, snake venom serine protease that may act in the hemostasis system of the prey. The sequence is that of Snake venom serine proteinase 4a from Crotalus adamanteus (Eastern diamondback rattlesnake).